A 94-amino-acid chain; its full sequence is UPF0235 protein TON_0641 (94 aa).

Belongs to the UPF0235 family.

This is UPF0235 protein TON_0641 from Thermococcus onnurineus (strain NA1).